We begin with the raw amino-acid sequence, 839 residues long: Valine--tRNA ligase (839 aa).

The 'HIGH' region signature appears at 41–51; that stretch reads PNVTGKLHIGH. Positions 315–343 form a coiled coil; sequence RENIVLKLKKENLIDKIENIKSNIIMSER. Residues 517 to 521 carry the 'KMSKS' region motif; it reads KMSKS. Lysine 520 contacts ATP. A coiled-coil region spans residues 813 to 839; sequence INNASEIKVKEEKEKLEKYIKEFEEIK.

It belongs to the class-I aminoacyl-tRNA synthetase family. ValS type 1 subfamily. In terms of assembly, monomer.

The protein resides in the cytoplasm. It catalyses the reaction tRNA(Val) + L-valine + ATP = L-valyl-tRNA(Val) + AMP + diphosphate. Its function is as follows. Catalyzes the attachment of valine to tRNA(Val). As ValRS can inadvertently accommodate and process structurally similar amino acids such as threonine, to avoid such errors, it has a 'posttransfer' editing activity that hydrolyzes mischarged Thr-tRNA(Val) in a tRNA-dependent manner. In Mycoplasma mobile (strain ATCC 43663 / 163K / NCTC 11711) (Mesomycoplasma mobile), this protein is Valine--tRNA ligase.